A 433-amino-acid chain; its full sequence is Chitinase-like protein EN03 (433 aa).

The N-terminal stretch at 1 to 16 (MKLFIALVGLLALAKA) is a signal peptide. The region spanning 23 to 433 (SKVLCYYDSR…PILRAAKYRL (411 aa)) is the GH18 domain. The cysteines at positions 27 and 54 are disulfide-linked. Asn-220 is a glycosylation site (N-linked (GlcNAc...) asparagine). A disulfide bond links Cys-337 and Cys-418.

This sequence belongs to the glycosyl hydrolase 18 family. IDGF subfamily.

Its subcellular location is the secreted. The polypeptide is Chitinase-like protein EN03 (Bombyx mori (Silk moth)).